The sequence spans 574 residues: MAIDPQPSSPSLSSETIANDTIGNDNNVNEPSVEPKTQEHQHTVPPRLSRIYSQAHHISQSFIDQNYPGEGTTQVPYRINFLPDDSQNAQLPPPMEEVGICGIKQVIRAFGISQEVATLGISLYVLGFTFGPLIWAPLSELYGRKKVFFFTFMVATAFSAGAAGAGSIASLLVLRFLTGSIGSAPLSNAPALIADMFDKSERGLAMCMFSGAPFLGPAIGPIAGGFLGETAGWRWLHGLMAAFTGVTWIACTVFIPETYAPYILRKRAQHMSKLTGKVYISTLDADKPPSSAAHQLKNALTRPWLLLFKEPIVFITSIYISIIYGTMYMCFAAFPIVFQQGRGWSQGIGGLAFTGIVIGVILSIISFAFEDKRYARAAQRRGAPMEPEDRLPPAIMGSLLIPIGLFWFAWTTFASIHWIVPIIGTVFFAWGLVLVFMALLNYLIDSYVIFAASIMAANSALRSLFGAAFPLFTRQMYDGLGVQWASSIPAFLALACVPFPFLFYKYGRQIRMKCEYAAEAANVLQKMRSLHVTVTEDDAMNEAEEMWRARTHNSHTSATHSHGHRRSLSCTRSV.

Residues 1 to 44 (MAIDPQPSSPSLSSETIANDTIGNDNNVNEPSVEPKTQEHQHTV) are disordered. Positions 9-30 (SPSLSSETIANDTIGNDNNVNE) are enriched in polar residues. The N-linked (GlcNAc...) asparagine glycan is linked to Asn-19. The next 11 membrane-spanning stretches (helical) occupy residues 116–136 (VATL…LIWA), 148–168 (FFFT…AGSI), 176–196 (FLTG…IADM), 208–228 (MFSG…GFLG), 235–255 (WLHG…TVFI), 318–338 (IYIS…PIVF), 348–368 (IGGL…ISFA), 394–414 (AIMG…TTFA), 419–439 (IVPI…FMAL), 449–469 (IFAA…GAAF), and 484–504 (WASS…FLFY). The tract at residues 552 to 574 (HNSHTSATHSHGHRRSLSCTRSV) is disordered.

The protein belongs to the major facilitator superfamily. DHA1 family. Polyamines/proton antiporter (TC 2.A.1.2.16) subfamily.

It localises to the cell membrane. Its function is as follows. Efflux pump involved in export of fusaric acid, a mycotoxin with low to moderate toxicity to animals and humans, but with high phytotoxic properties. Constitutes a self-protecting mechanism of the fungus against critical levels of fusaric acid within the cell. The chain is Efflux pump FUB11 from Gibberella fujikuroi (strain CBS 195.34 / IMI 58289 / NRRL A-6831) (Bakanae and foot rot disease fungus).